The primary structure comprises 246 residues: Uridylate kinase (246 aa).

11–14 (KLSG) provides a ligand contact to ATP. Gly-53 contributes to the UMP binding site. ATP-binding residues include Gly-54 and Arg-58. UMP contacts are provided by residues Asp-73 and 134–141 (TGNPYFTT). ATP-binding residues include Thr-161, Tyr-167, and Asp-170.

The protein belongs to the UMP kinase family. As to quaternary structure, homohexamer.

The protein localises to the cytoplasm. It catalyses the reaction UMP + ATP = UDP + ADP. It functions in the pathway pyrimidine metabolism; CTP biosynthesis via de novo pathway; UDP from UMP (UMPK route): step 1/1. Its activity is regulated as follows. Inhibited by UTP. Catalyzes the reversible phosphorylation of UMP to UDP. This Leptospira borgpetersenii serovar Hardjo-bovis (strain JB197) protein is Uridylate kinase.